The following is a 303-amino-acid chain: Signal recognition particle receptor FtsY (303 aa).

GTP is bound by residues 108–115 (GVNGAGKT), 190–194 (DTAGR), and 254–257 (TKLD).

The protein belongs to the GTP-binding SRP family. FtsY subfamily. Part of the signal recognition particle protein translocation system, which is composed of SRP and FtsY. SRP is a ribonucleoprotein composed of Ffh and a 4.5S RNA molecule.

It is found in the cell inner membrane. The protein localises to the cytoplasm. It carries out the reaction GTP + H2O = GDP + phosphate + H(+). Functionally, involved in targeting and insertion of nascent membrane proteins into the cytoplasmic membrane. Acts as a receptor for the complex formed by the signal recognition particle (SRP) and the ribosome-nascent chain (RNC). Interaction with SRP-RNC leads to the transfer of the RNC complex to the Sec translocase for insertion into the membrane, the hydrolysis of GTP by both Ffh and FtsY, and the dissociation of the SRP-FtsY complex into the individual components. The polypeptide is Signal recognition particle receptor FtsY (Rickettsia conorii (strain ATCC VR-613 / Malish 7)).